The primary structure comprises 294 residues: Acetyl-coenzyme A carboxylase carboxyl transferase subunit beta (294 aa).

Residues 30-294 (IMTKCPECKK…PEAGGESDGE (265 aa)) enclose the CoA carboxyltransferase N-terminal domain. Zn(2+) is bound by residues C34, C37, C53, and C56. The C4-type zinc finger occupies 34-56 (CPECKKIMYTKELQKNLMVCNYC).

The protein belongs to the AccD/PCCB family. As to quaternary structure, acetyl-CoA carboxylase is a heterohexamer composed of biotin carboxyl carrier protein (AccB), biotin carboxylase (AccC) and two subunits each of ACCase subunit alpha (AccA) and ACCase subunit beta (AccD). Zn(2+) is required as a cofactor.

Its subcellular location is the cytoplasm. The enzyme catalyses N(6)-carboxybiotinyl-L-lysyl-[protein] + acetyl-CoA = N(6)-biotinyl-L-lysyl-[protein] + malonyl-CoA. It participates in lipid metabolism; malonyl-CoA biosynthesis; malonyl-CoA from acetyl-CoA: step 1/1. Component of the acetyl coenzyme A carboxylase (ACC) complex. Biotin carboxylase (BC) catalyzes the carboxylation of biotin on its carrier protein (BCCP) and then the CO(2) group is transferred by the transcarboxylase to acetyl-CoA to form malonyl-CoA. This is Acetyl-coenzyme A carboxylase carboxyl transferase subunit beta from Listeria innocua serovar 6a (strain ATCC BAA-680 / CLIP 11262).